Reading from the N-terminus, the 332-residue chain is 3'(2'),5'-bisphosphate nucleotidase (332 aa).

Catalysis depends on D49, which acts as the Proton acceptor. Positions 73, 129, 131, and 132 each coordinate Mg(2+). T134 (proton acceptor) is an active-site residue. 5 residues coordinate adenosine 3',5'-bisphosphate: T134, S245, K248, R262, and D274. AMP-binding residues include S245, K248, R262, and D274. D274 contributes to the Mg(2+) binding site.

It belongs to the inositol monophosphatase superfamily. Mg(2+) is required as a cofactor.

The catalysed reaction is 3'-phosphoadenylyl sulfate + H2O = adenosine 5'-phosphosulfate + phosphate. It catalyses the reaction adenosine 3',5'-bisphosphate + H2O = AMP + phosphate. It carries out the reaction adenosine 2',5'-bisphosphate + H2O = AMP + phosphate. The enzyme catalyses 1D-myo-inositol 1,4-bisphosphate + H2O = 1D-myo-inositol 4-phosphate + phosphate. The catalysed reaction is 1D-myo-inositol 1,3,4-trisphosphate + H2O = 1D-myo-inositol 3,4-bisphosphate + phosphate. Its function is as follows. Phosphatase that converts adenosine 3'-phosphate 5'-phosphosulfate (PAPS) to adenosine 5'-phosphosulfate (APS) and 3'(2')-phosphoadenosine 5'-phosphate (PAP) to AMP. Is also able to hydrolyze inositol 1,4-bisphosphate and inositol 1,3,4-trisphosphate. This is 3'(2'),5'-bisphosphate nucleotidase from Dictyostelium discoideum (Social amoeba).